The primary structure comprises 403 residues: Aminomethyltransferase, mitochondrial (403 aa).

The N-terminal 28 residues, 1 to 28 (MQRAVSVVARLGFRLQAFPPALCRPLSC), are a transit peptide targeting the mitochondrion. Substrate-binding residues include glutamate 232, arginine 261, and tyrosine 399.

Belongs to the GcvT family. In terms of assembly, the glycine cleavage system is composed of four proteins: P, T, L and H.

The protein localises to the mitochondrion. The catalysed reaction is N(6)-[(R)-S(8)-aminomethyldihydrolipoyl]-L-lysyl-[protein] + (6S)-5,6,7,8-tetrahydrofolate = N(6)-[(R)-dihydrolipoyl]-L-lysyl-[protein] + (6R)-5,10-methylene-5,6,7,8-tetrahydrofolate + NH4(+). Functionally, the glycine cleavage system catalyzes the degradation of glycine. The protein is Aminomethyltransferase, mitochondrial of Homo sapiens (Human).